The primary structure comprises 373 residues: XK-related protein 9 (373 aa).

8 helical membrane-spanning segments follow: residues 8–28 (FMMS…DIWV), 38–58 (YVFS…AQCF), 166–186 (AAIM…QVAL), 203–223 (ITYL…VVLL), 224–244 (LFLN…LGII), 256–276 (CISM…FTFF), 295–315 (VLGT…IFNP), and 318–338 (FIPI…FLIV).

The protein belongs to the XK family. In terms of processing, undergoes proteolytic processing by caspase-3 (CASP3), caspase-6 (CASP6) and caspase-7 (CASP7) to generate the XK-related protein 9, processed form, leading to its activation.

Its subcellular location is the cell membrane. It catalyses the reaction a 1,2-diacyl-sn-glycero-3-phospho-L-serine(in) = a 1,2-diacyl-sn-glycero-3-phospho-L-serine(out). With respect to regulation, activated upon caspase cleavage to generate the XK-related protein 9, processed form. Does not act prior the onset of apoptosis. Its function is as follows. Phospholipid scramblase that promotes phosphatidylserine exposure on apoptotic cell surface. Phosphatidylserine is a specific marker only present at the surface of apoptotic cells and acts as a specific signal for engulfment. The sequence is that of XK-related protein 9 from Pan troglodytes (Chimpanzee).